A 342-amino-acid polypeptide reads, in one-letter code: Phosphate acyltransferase (342 aa).

The protein belongs to the PlsX family. As to quaternary structure, homodimer. Probably interacts with PlsY.

The protein resides in the cytoplasm. The enzyme catalyses a fatty acyl-[ACP] + phosphate = an acyl phosphate + holo-[ACP]. It participates in lipid metabolism; phospholipid metabolism. Its function is as follows. Catalyzes the reversible formation of acyl-phosphate (acyl-PO(4)) from acyl-[acyl-carrier-protein] (acyl-ACP). This enzyme utilizes acyl-ACP as fatty acyl donor, but not acyl-CoA. The sequence is that of Phosphate acyltransferase from Actinobacillus succinogenes (strain ATCC 55618 / DSM 22257 / CCUG 43843 / 130Z).